Reading from the N-terminus, the 335-residue chain is Methionine import ATP-binding protein MetN 1 (335 aa).

An ABC transporter domain is found at 2 to 242 (IEFQNVHKTY…PKHPTTKRFV (241 aa)). 38–45 (GHSGAGKS) is an ATP binding site.

The protein belongs to the ABC transporter superfamily. Methionine importer (TC 3.A.1.24) family. As to quaternary structure, the complex is composed of two ATP-binding proteins (MetN), two transmembrane proteins (MetI) and a solute-binding protein (MetQ).

It is found in the cell inner membrane. It carries out the reaction L-methionine(out) + ATP + H2O = L-methionine(in) + ADP + phosphate + H(+). It catalyses the reaction D-methionine(out) + ATP + H2O = D-methionine(in) + ADP + phosphate + H(+). In terms of biological role, part of the ABC transporter complex MetNIQ involved in methionine import. Responsible for energy coupling to the transport system. The protein is Methionine import ATP-binding protein MetN 1 of Pseudomonas fluorescens (strain Pf0-1).